The sequence spans 522 residues: Response regulator mcs4 (522 aa).

The interval 148 to 274 (DSLESPVSAP…RSISHSSLYT (127 aa)) is disordered. Residues 174-194 (NLRNASRTRSHQTLPSSNVNK) are compositionally biased toward polar residues. The segment covering 244–255 (RSDESTAEKLAK) has biased composition (basic and acidic residues). Polar residues predominate over residues 260–274 (TPTNSRSISHSSLYT). In terms of domain architecture, Response regulatory spans 363–505 (NVLIVEDNII…WLEKKITEWG (143 aa)). Asp-412 carries the 4-aspartylphosphate modification.

Its subcellular location is the cytoplasm. Its function is as follows. Response regulator that coordinately controls the stress activated wak1-wis1-sty1 MAP kinase pathway and fission yeast cell cycle. The sequence is that of Response regulator mcs4 (mcs4) from Schizosaccharomyces pombe (strain 972 / ATCC 24843) (Fission yeast).